The sequence spans 160 residues: Large ribosomal subunit protein uL22c (160 aa).

Belongs to the universal ribosomal protein uL22 family. As to quaternary structure, part of the 50S ribosomal subunit.

The protein resides in the plastid. It localises to the chloroplast. Its function is as follows. This protein binds specifically to 23S rRNA. The globular domain of the protein is located near the polypeptide exit tunnel on the outside of the subunit, while an extended beta-hairpin is found that lines the wall of the exit tunnel in the center of the 70S ribosome. The polypeptide is Large ribosomal subunit protein uL22c (rpl22) (Capsella bursa-pastoris (Shepherd's purse)).